The sequence spans 90 residues: DNA-directed RNA polymerase subunit omega (90 aa).

It belongs to the RNA polymerase subunit omega family. In terms of assembly, the RNAP catalytic core consists of 2 alpha, 1 beta, 1 beta' and 1 omega subunit. When a sigma factor is associated with the core the holoenzyme is formed, which can initiate transcription.

It carries out the reaction RNA(n) + a ribonucleoside 5'-triphosphate = RNA(n+1) + diphosphate. Functionally, promotes RNA polymerase assembly. Latches the N- and C-terminal regions of the beta' subunit thereby facilitating its interaction with the beta and alpha subunits. Required for kasugamycin production and aerial mycelium formation in S.kasugaensis and responsible for pleiotropy. The protein is DNA-directed RNA polymerase subunit omega (rpoZ) of Streptomyces kasugaensis.